Here is a 237-residue protein sequence, read N- to C-terminus: Protein GrpE (237 aa).

Residues 1-65 (MTDSYKLPDN…DAREDDRDPT (65 aa)) form a disordered region. The span at 55-65 (VDAREDDRDPT) shows a compositional bias: basic and acidic residues.

Belongs to the GrpE family. As to quaternary structure, homodimer.

The protein localises to the cytoplasm. In terms of biological role, participates actively in the response to hyperosmotic and heat shock by preventing the aggregation of stress-denatured proteins, in association with DnaK and GrpE. It is the nucleotide exchange factor for DnaK and may function as a thermosensor. Unfolded proteins bind initially to DnaJ; upon interaction with the DnaJ-bound protein, DnaK hydrolyzes its bound ATP, resulting in the formation of a stable complex. GrpE releases ADP from DnaK; ATP binding to DnaK triggers the release of the substrate protein, thus completing the reaction cycle. Several rounds of ATP-dependent interactions between DnaJ, DnaK and GrpE are required for fully efficient folding. The sequence is that of Protein GrpE from Corynebacterium efficiens (strain DSM 44549 / YS-314 / AJ 12310 / JCM 11189 / NBRC 100395).